We begin with the raw amino-acid sequence, 161 residues long: 2-C-methyl-D-erythritol 2,4-cyclodiphosphate synthase (161 aa).

2 residues coordinate a divalent metal cation: aspartate 10 and histidine 12. Residues 10–12 and 36–37 contribute to the 4-CDP-2-C-methyl-D-erythritol 2-phosphate site; these read DVH and HS. A divalent metal cation is bound at residue histidine 44. Residues 58–60, 63–67, and arginine 144 contribute to the 4-CDP-2-C-methyl-D-erythritol 2-phosphate site; these read DIG and FSDTD.

This sequence belongs to the IspF family. Homotrimer. A divalent metal cation is required as a cofactor.

The enzyme catalyses 4-CDP-2-C-methyl-D-erythritol 2-phosphate = 2-C-methyl-D-erythritol 2,4-cyclic diphosphate + CMP. Its pathway is isoprenoid biosynthesis; isopentenyl diphosphate biosynthesis via DXP pathway; isopentenyl diphosphate from 1-deoxy-D-xylulose 5-phosphate: step 4/6. Functionally, involved in the biosynthesis of isopentenyl diphosphate (IPP) and dimethylallyl diphosphate (DMAPP), two major building blocks of isoprenoid compounds. Catalyzes the conversion of 4-diphosphocytidyl-2-C-methyl-D-erythritol 2-phosphate (CDP-ME2P) to 2-C-methyl-D-erythritol 2,4-cyclodiphosphate (ME-CPP) with a corresponding release of cytidine 5-monophosphate (CMP). This chain is 2-C-methyl-D-erythritol 2,4-cyclodiphosphate synthase, found in Burkholderia ambifaria (strain ATCC BAA-244 / DSM 16087 / CCUG 44356 / LMG 19182 / AMMD) (Burkholderia cepacia (strain AMMD)).